The sequence spans 221 residues: NIP3 homolog (221 aa).

The interval 24-55 is disordered; the sequence is GEKTDESVQPQQQTEQSSAQQTTPSAKAVSNP. Residue lysine 26 forms a Glycyl lysine isopeptide (Lys-Gly) (interchain with G-Cter in ubiquitin) linkage. A compositionally biased stretch (low complexity) spans 32-49; that stretch reads QPQQQTEQSSAQQTTPSA. The helical transmembrane segment at 189–209 threads the bilayer; it reads VVFGFLVTNIFSFVVGAAVGF. The tract at residues 189-209 is required for initiation of apoptosis; sequence VVFGFLVTNIFSFVVGAAVGF.

Belongs to the NIP3 family. As to quaternary structure, homodimer; via transmembrane domain. Interacts with ced-3 and ced-9. Ubiquitinated and degraded by the proteasome. Under oxidative stress conditions, ubiquitinated at Lys-26 in a pink-1 dependent manner. Colocalizes with pdr-1 and may be ubiquitinated by it. As to expression, expressed in all somatic tissues including neurons, pharynx, intestine, body wall muscles and vulva muscles.

It localises to the mitochondrion outer membrane. Its function is as follows. Initiates apoptosis in a BH3-independent mechanism possibly by recruiting ced-3 to mitochondria and other cytoplasmic membranes. Has a role in lifespan and tumor growth. Required for the induction of mitophagy under stress conditions. This chain is NIP3 homolog, found in Caenorhabditis elegans.